Reading from the N-terminus, the 329-residue chain is GTP 3',8-cyclase (329 aa).

The Radical SAM core domain occupies 8–234 (AFARKFYYLR…QLRQRSDGPA (227 aa)). Arg17 contributes to the GTP binding site. [4Fe-4S] cluster-binding residues include Cys24 and Cys28. S-adenosyl-L-methionine is bound at residue Tyr30. Cys31 lines the [4Fe-4S] cluster pocket. A GTP-binding site is contributed by Arg68. Gly72 is an S-adenosyl-L-methionine binding site. Residue Thr99 coordinates GTP. Ser123 is a binding site for S-adenosyl-L-methionine. Lys160 lines the GTP pocket. Position 194 (Met194) interacts with S-adenosyl-L-methionine. Cys257 and Cys260 together coordinate [4Fe-4S] cluster. 262–264 (RLR) contacts GTP. Cys274 provides a ligand contact to [4Fe-4S] cluster.

It belongs to the radical SAM superfamily. MoaA family. As to quaternary structure, monomer and homodimer. The cofactor is [4Fe-4S] cluster.

It carries out the reaction GTP + AH2 + S-adenosyl-L-methionine = (8S)-3',8-cyclo-7,8-dihydroguanosine 5'-triphosphate + 5'-deoxyadenosine + L-methionine + A + H(+). It participates in cofactor biosynthesis; molybdopterin biosynthesis. Catalyzes the cyclization of GTP to (8S)-3',8-cyclo-7,8-dihydroguanosine 5'-triphosphate. This is GTP 3',8-cyclase from Escherichia fergusonii (strain ATCC 35469 / DSM 13698 / CCUG 18766 / IAM 14443 / JCM 21226 / LMG 7866 / NBRC 102419 / NCTC 12128 / CDC 0568-73).